We begin with the raw amino-acid sequence, 203 residues long: Small ribosomal subunit protein uS4c (203 aa).

The segment at 15–42 is disordered; it reads LGALPGLTSKRPRAGSDPRNQELSGNKS. In terms of domain architecture, S4 RNA-binding spans 89 to 150; that stretch reads MRLDNILFRL…DQKSKAMIQN (62 aa).

It belongs to the universal ribosomal protein uS4 family. As to quaternary structure, part of the 30S ribosomal subunit. Contacts protein S5. The interaction surface between S4 and S5 is involved in control of translational fidelity.

The protein localises to the plastid. Its subcellular location is the chloroplast. Functionally, one of the primary rRNA binding proteins, it binds directly to 16S rRNA where it nucleates assembly of the body of the 30S subunit. Its function is as follows. With S5 and S12 plays an important role in translational accuracy. This is Small ribosomal subunit protein uS4c (rps4) from Oenothera elata subsp. hookeri (Hooker's evening primrose).